Here is a 539-residue protein sequence, read N- to C-terminus: Gamma-2-syntrophin (539 aa).

Positions 73-156 constitute a PDZ domain; that stretch reads TVTLRRQPVG…DVTITVEYLR (84 aa). A PH domain is found at 296 to 421; the sequence is QVVHMGWVNE…WEKAFQRATF (126 aa).

This sequence belongs to the syntrophin family. Interacts with the dystrophin protein DMD and related proteins DTNA and DTNB.

It is found in the cell membrane. Its subcellular location is the sarcolemma. The protein localises to the cytoplasm. The protein resides in the cytoskeleton. Its function is as follows. Adapter protein that binds to and probably organizes the subcellular localization of a variety of proteins. May link various receptors to the actin cytoskeleton and the dystrophin glycoprotein complex. The sequence is that of Gamma-2-syntrophin (Sntg2) from Mus musculus (Mouse).